A 537-amino-acid chain; its full sequence is 5,6-dihydroxyindole-2-carboxylic acid oxidase (537 aa).

The signal sequence occupies residues 1–24 (MKSPTLLSLGYMFLVLLFFQQAWA). Residues 25–477 (QFPRECATIE…WPSRSFSISE (453 aa)) are Lumenal, melanosome-facing. Intrachain disulfides connect cysteine 30–cysteine 41, cysteine 42–cysteine 65, cysteine 56–cysteine 99, cysteine 101–cysteine 110, and cysteine 113–cysteine 122. 2 N-linked (GlcNAc...) asparagine glycosylation sites follow: asparagine 96 and asparagine 104. The N-linked (GlcNAc...) asparagine glycan is linked to asparagine 181. Residues histidine 192, histidine 215, and histidine 224 each coordinate Zn(2+). 2 cysteine pairs are disulfide-bonded: cysteine 258/cysteine 261 and cysteine 290/cysteine 303. Asparagine 304 and asparagine 350 each carry an N-linked (GlcNAc...) asparagine glycan. Positions 377 and 381 each coordinate Zn(2+). A glycan (N-linked (GlcNAc...) asparagine) is linked at asparagine 385. Histidine 404 is a Zn(2+) binding site. The helical transmembrane segment at 478–501 (IVTIAVVAALSLVAVIFAGASCLI) threads the bilayer. Over 502–537 (RARSNMDEANQPLLTDQYQHYIEEYEKIHNPNQSVV) the chain is Cytoplasmic.

Belongs to the tyrosinase family. As to quaternary structure, monomer. Interacts with ATP7A. Interacts with SLC45A2. It depends on Cu(2+) as a cofactor. Requires Zn(2+) as cofactor. In terms of processing, glycosylated.

The protein localises to the melanosome membrane. The enzyme catalyses 2 5,6-dihydroxyindole-2-carboxylate + O2 = 2 indole-5,6-quinone-2-carboxylate + 2 H2O. Its pathway is pigment biosynthesis; melanin biosynthesis. Functionally, plays a role in melanin biosynthesis. Catalyzes the oxidation of 5,6-dihydroxyindole-2-carboxylic acid (DHICA) into indole-5,6-quinone-2-carboxylic acid. May regulate or influence the type of melanin synthesized. Also to a lower extent, capable of hydroxylating tyrosine and producing melanin. This Bos taurus (Bovine) protein is 5,6-dihydroxyindole-2-carboxylic acid oxidase (TYRP1).